A 436-amino-acid chain; its full sequence is Prenyltransferase nscD (436 aa).

Belongs to the tryptophan dimethylallyltransferase family.

The protein operates within secondary metabolite biosynthesis. Its function is as follows. Prenyltransferase; part of the gene cluster that mediates the biosynthesis of neosartoricin B, a prenylated anthracenone that probably exhibits T-cell antiproliferative activity, suggestive of a physiological role as an immunosuppressive agent. The non-reducing polyketide synthase nscA probably synthesizes and cyclizes the decaketide backbone. The hydrolase nscB then mediates the product release through hydrolysis followed by spontaneous decarboxylation. The prenyltransferase nscD catalyzes the addition of the dimethylallyl group to the aromatic C5. The FAD-dependent monooxygenase nscC is then responsible for the stereospecific hydroxylation at C2. Neosartoricin B can be converted into two additional compounds neosartoricins C and D. Neosartoricin C is a spirocyclic compound that is cyclized through the attack of C3 hydroxyl on C14, followed by dehydration. On the other hand, neosartoricin D is a further cyclized compound in which attack of C2 on C14 in neosartoricin C results in the formation of the acetal-containing dioxabicyclo-octanone ring. Both of these compounds are novel and possibly represent related metabolites of the gene cluster. The polypeptide is Prenyltransferase nscD (Arthroderma otae (strain ATCC MYA-4605 / CBS 113480) (Microsporum canis)).